A 775-amino-acid polypeptide reads, in one-letter code: Lon protease (775 aa).

The 202-residue stretch at 6-207 (LPLMALRDIV…TIINILTSNI (202 aa)) folds into the Lon N-terminal domain. Position 356 to 363 (356 to 363 (GPPGVGKT)) interacts with ATP. The region spanning 592 to 773 (NDQIGSTTGL…DQVLEHALTK (182 aa)) is the Lon proteolytic domain. Residues serine 679 and lysine 722 contribute to the active site.

Belongs to the peptidase S16 family. In terms of assembly, homohexamer. Organized in a ring with a central cavity.

It localises to the cytoplasm. The catalysed reaction is Hydrolysis of proteins in presence of ATP.. ATP-dependent serine protease that mediates the selective degradation of mutant and abnormal proteins as well as certain short-lived regulatory proteins. Required for cellular homeostasis and for survival from DNA damage and developmental changes induced by stress. Degrades polypeptides processively to yield small peptide fragments that are 5 to 10 amino acids long. Binds to DNA in a double-stranded, site-specific manner. The protein is Lon protease of Rickettsia bellii (strain RML369-C).